A 1198-amino-acid chain; its full sequence is Chromosome partition protein Smc (1198 aa).

Residue 40–47 participates in ATP binding; the sequence is PNGSGKSN. Coiled coils occupy residues 175–211 and 322–524; these read ITKY…GQLG and LGEQ…LAKK. The SMC hinge domain maps to 534–647; the sequence is CGTLADLLQV…VTDMEAATRV (114 aa). Positions 687–1042 form a coiled coil; it reads SREIQELRQE…AELDKTMSER (356 aa). Residues 785 to 818 are disordered; the sequence is AEEQSKLTDSIQEAQEALARQEEKNRQASREMEQ. Residues 803-818 are compositionally biased toward basic and acidic residues; that stretch reads ARQEEKNRQASREMEQ.

The protein belongs to the SMC family. In terms of assembly, homodimer.

Its subcellular location is the cytoplasm. Its function is as follows. Required for chromosome condensation and partitioning. The protein is Chromosome partition protein Smc of Desulfitobacterium hafniense (strain Y51).